We begin with the raw amino-acid sequence, 310 residues long: HPr kinase/phosphorylase (310 aa).

Residues histidine 136 and lysine 157 contribute to the active site. Glycine 151 to serine 158 is an ATP binding site. Serine 158 contacts Mg(2+). The active-site Proton acceptor; for phosphorylation activity. Proton donor; for dephosphorylation activity is the aspartate 175. Residues leucine 199 to asparagine 208 are important for the catalytic mechanism of both phosphorylation and dephosphorylation. Mg(2+) is bound at residue glutamate 200. Residue arginine 241 is part of the active site. Residues proline 262 to arginine 267 form an important for the catalytic mechanism of dephosphorylation region.

This sequence belongs to the HPrK/P family. As to quaternary structure, homohexamer. It depends on Mg(2+) as a cofactor.

The enzyme catalyses [HPr protein]-L-serine + ATP = [HPr protein]-O-phospho-L-serine + ADP + H(+). It carries out the reaction [HPr protein]-O-phospho-L-serine + phosphate + H(+) = [HPr protein]-L-serine + diphosphate. Its function is as follows. Catalyzes the ATP- as well as the pyrophosphate-dependent phosphorylation of a specific serine residue in HPr, a phosphocarrier protein of the phosphoenolpyruvate-dependent sugar phosphotransferase system (PTS). HprK/P also catalyzes the pyrophosphate-producing, inorganic phosphate-dependent dephosphorylation (phosphorolysis) of seryl-phosphorylated HPr (P-Ser-HPr). The two antagonistic activities of HprK/P are regulated by several intracellular metabolites, which change their concentration in response to the absence or presence of rapidly metabolisable carbon sources (glucose, fructose, etc.) in the growth medium. Therefore, by controlling the phosphorylation state of HPr, HPrK/P is a sensor enzyme that plays a major role in the regulation of carbon metabolism and sugar transport: it mediates carbon catabolite repression (CCR), and regulates PTS-catalyzed carbohydrate uptake and inducer exclusion. The polypeptide is HPr kinase/phosphorylase (Staphylococcus epidermidis (strain ATCC 35984 / DSM 28319 / BCRC 17069 / CCUG 31568 / BM 3577 / RP62A)).